A 518-amino-acid chain; its full sequence is Putative succinate-semialdehyde dehydrogenase [NADP(+)] 2 (518 aa).

Residues 157-158 (WN), 181-184 (KPDS), and 232-233 (GS) contribute to the NADP(+) site. Residue glutamate 254 is the Proton acceptor of the active site. Leucine 255 is a binding site for NADP(+). Cysteine 288 acts as the Nucleophile in catalysis. NADP(+) is bound at residue glutamate 386.

This sequence belongs to the aldehyde dehydrogenase family.

It catalyses the reaction succinate semialdehyde + NADP(+) + H2O = succinate + NADPH + 2 H(+). Its function is as follows. Catalyzes the NADP(+)-dependent oxidation of succinate semialdehyde to succinate. Although it has succinate semialdehyde dehydrogenase activity, is likely to act physiologically on a different aldehyde(s). The sequence is that of Putative succinate-semialdehyde dehydrogenase [NADP(+)] 2 (gabD2) from Mycobacterium ulcerans (strain Agy99).